The sequence spans 152 residues: Ribosome maturation factor RimP (152 aa).

The protein belongs to the RimP family.

It is found in the cytoplasm. Functionally, required for maturation of 30S ribosomal subunits. The protein is Ribosome maturation factor RimP of Rubrobacter xylanophilus (strain DSM 9941 / JCM 11954 / NBRC 16129 / PRD-1).